We begin with the raw amino-acid sequence, 150 residues long: MKKYTRQRLILDLIEENEIRTQEELSDYLEAHGVRATQATISRDIKELRISKVQTREGEYHYAIIDTVHDSLNERLDKIFRSAVLTIKHNEDMVIIKTISHTATVCGMAITNAKLDNIAGILTGNDTIYITVEDKSGLEKLVSEIKSIIR.

The protein belongs to the ArgR family.

Its subcellular location is the cytoplasm. Its pathway is amino-acid biosynthesis; L-arginine biosynthesis [regulation]. Its function is as follows. Regulates arginine biosynthesis genes. In Finegoldia magna (strain ATCC 29328 / DSM 20472 / WAL 2508) (Peptostreptococcus magnus), this protein is Arginine repressor.